The primary structure comprises 98 residues: Serine protease inhibitor Kazal-type 14 (98 aa).

The signal sequence occupies residues 1 to 23; that stretch reads MVKYFQVLWSLLFSIMLHSMLLA. Residues 35 to 98 enclose the Kazal-like domain; sequence GLIKIKCPYK…QIRYYHTGRC (64 aa). 3 cysteine pairs are disulfide-bonded: cysteine 41–cysteine 80, cysteine 58–cysteine 77, and cysteine 66–cysteine 98. An N-linked (GlcNAc...) asparagine glycan is attached at asparagine 52.

The protein resides in the secreted. Its function is as follows. May be a serine protease inhibitor. This is Serine protease inhibitor Kazal-type 14 (Spink14) from Rattus norvegicus (Rat).